Reading from the N-terminus, the 532-residue chain is Probable alpha-galactosidase A (532 aa).

Positions 1 to 21 are cleaved as a signal peptide; that stretch reads MDTTKSLLSTLIAIMIPLSLG. A disulfide bridge links cysteine 44 with cysteine 76. N-linked (GlcNAc...) asparagine glycosylation is found at asparagine 47, asparagine 91, and asparagine 121. A disulfide bridge connects residues cysteine 124 and cysteine 154. Catalysis depends on aspartate 152, which acts as the Nucleophile. N-linked (GlcNAc...) asparagine glycosylation occurs at asparagine 201. The Proton donor role is filled by aspartate 210. Positions 410–531 constitute a Ricin B-type lectin domain; it reads CSTVIPTGIV…GLPSGVDIKP (122 aa). 2 disulfides stabilise this stretch: cysteine 427–cysteine 441 and cysteine 466–cysteine 478.

Belongs to the glycosyl hydrolase 27 family.

Its subcellular location is the secreted. The catalysed reaction is Hydrolysis of terminal, non-reducing alpha-D-galactose residues in alpha-D-galactosides, including galactose oligosaccharides, galactomannans and galactolipids.. Its function is as follows. Hydrolyzes a variety of simple alpha-D-galactoside as well as more complex molecules such as oligosaccharides and polysaccharides. The protein is Probable alpha-galactosidase A (aglA) of Aspergillus fumigatus (strain ATCC MYA-4609 / CBS 101355 / FGSC A1100 / Af293) (Neosartorya fumigata).